The sequence spans 428 residues: Adenylosuccinate synthetase (428 aa).

Residues 13–19 (GDEGKGK) and 41–43 (GHT) contribute to the GTP site. Aspartate 14 serves as the catalytic Proton acceptor. 2 residues coordinate Mg(2+): aspartate 14 and glycine 41. IMP-binding positions include 14–17 (DEGK), 39–42 (NAGH), threonine 130, arginine 144, glutamine 223, threonine 238, and arginine 302. Residue histidine 42 is the Proton donor of the active site. 298-304 (ASTGRRR) is a substrate binding site. GTP is bound by residues arginine 304, 330-332 (KLD), and 412-414 (STG).

The protein belongs to the adenylosuccinate synthetase family. Homodimer. Mg(2+) serves as cofactor.

It is found in the cytoplasm. The catalysed reaction is IMP + L-aspartate + GTP = N(6)-(1,2-dicarboxyethyl)-AMP + GDP + phosphate + 2 H(+). The protein operates within purine metabolism; AMP biosynthesis via de novo pathway; AMP from IMP: step 1/2. In terms of biological role, plays an important role in the de novo pathway of purine nucleotide biosynthesis. Catalyzes the first committed step in the biosynthesis of AMP from IMP. The protein is Adenylosuccinate synthetase of Dichelobacter nodosus (strain VCS1703A).